Here is a 252-residue protein sequence, read N- to C-terminus: Probable transcriptional regulatory protein CE1776 (252 aa).

A disordered region spans residues 1–22 (MAGHSKWATTKHKKAANDAKRG).

The protein belongs to the TACO1 family.

The protein resides in the cytoplasm. The polypeptide is Probable transcriptional regulatory protein CE1776 (Corynebacterium efficiens (strain DSM 44549 / YS-314 / AJ 12310 / JCM 11189 / NBRC 100395)).